A 345-amino-acid polypeptide reads, in one-letter code: Phosphoribosylformylglycinamidine cyclo-ligase (345 aa).

Belongs to the AIR synthase family.

It localises to the cytoplasm. The catalysed reaction is 2-formamido-N(1)-(5-O-phospho-beta-D-ribosyl)acetamidine + ATP = 5-amino-1-(5-phospho-beta-D-ribosyl)imidazole + ADP + phosphate + H(+). It functions in the pathway purine metabolism; IMP biosynthesis via de novo pathway; 5-amino-1-(5-phospho-D-ribosyl)imidazole from N(2)-formyl-N(1)-(5-phospho-D-ribosyl)glycinamide: step 2/2. This chain is Phosphoribosylformylglycinamidine cyclo-ligase, found in Shewanella baltica (strain OS223).